Reading from the N-terminus, the 1782-residue chain is Vitellogenin receptor (1782 aa).

An N-terminal signal peptide occupies residues 1 to 18 (MRFIVLLFICSFIYPCYV). Residues 19-1663 (SSIGFRRISK…SINFSRNTRN (1645 aa)) lie on the Extracellular side of the membrane. LDL-receptor class A domains lie at 35 to 72 (KCED…FECD), 81 to 118 (TCAK…DGCV), and 122 to 157 (NCTN…WNCK). 6 cysteine pairs are disulfide-bonded: Cys36–Cys48, Cys43–Cys61, Cys55–Cys71, Cys82–Cys94, Cys89–Cys107, and Cys101–Cys117. The N-linked (GlcNAc...) asparagine glycan is linked to Asn122. 3 disulfide bridges follow: Cys123–Cys134, Cys129–Cys147, and Cys141–Cys156. An N-linked (GlcNAc...) asparagine glycan is attached at Asn159. The LDL-receptor class A 4 domain maps to 166 to 205 (SCKTENYQYMCANHRCISLKVVCDKKDDCGDGSDEGPGCT). 3 cysteine pairs are disulfide-bonded: Cys167–Cys181, Cys176–Cys194, and Cys188–Cys204. N-linked (GlcNAc...) asparagine glycans are attached at residues Asn208 and Asn239. An EGF-like 1 domain is found at 208–243 (NCSSAGCQSNCHQTPKGSVCTCKPGYKLQKDNRTCN). An EGF-like; calcium-binding domain is found at 244–283 (DIDECQAYGICDQDCMNVPGSYACTCQREYYLENDKRTCK). 3 disulfide bridges follow: Cys248-Cys258, Cys254-Cys267, and Cys269-Cys282. LDL-receptor class B repeat units lie at residues 327–374 (DYVY…DWIT), 375–416 (KNIY…LPTQ), 417–460 (GKMY…DYPN), 461–501 (ERLY…TVFQ), and 502–544 (NKLY…DHSA). One can recognise an EGF-like 2 domain in the interval 552–588 (PCYSNPCSQLCMLNQNKGYTCGCTLDKKLNADKHTCQ). Residues Asn702, Asn859, Asn896, and Asn923 are each glycosylated (N-linked (GlcNAc...) asparagine). Positions 889-927 (DCQKNNGNCSHVCLPSLITSFICACPPGMELSNDNRTCI) constitute an EGF-like 3 domain. 5 consecutive LDL-receptor class A domains span residues 931–969 (ECSK…SECR), 973–1009 (RCKE…QNCE), 1012–1049 (KCKS…EDCR), 1052–1090 (ECTS…EKCY), and 1094–1131 (ACKM…VHCL). 15 disulfides stabilise this stretch: Cys932–Cys945, Cys939–Cys958, Cys952–Cys968, Cys974–Cys986, Cys981–Cys999, Cys993–Cys1008, Cys1013–Cys1026, Cys1020–Cys1039, Cys1033–Cys1048, Cys1053–Cys1065, Cys1060–Cys1078, Cys1072–Cys1089, Cys1095–Cys1108, Cys1103–Cys1121, and Cys1115–Cys1130. 2 N-linked (GlcNAc...) asparagine glycosylation sites follow: Asn1133 and Asn1140. LDL-receptor class A domains are found at residues 1140 to 1177 (NCSL…QNCT), 1178 to 1214 (YCFE…KNCD), and 1225 to 1260 (ECDE…GKCQ). 9 disulfide bridges follow: Cys1141-Cys1154, Cys1148-Cys1167, Cys1161-Cys1176, Cys1179-Cys1191, Cys1186-Cys1204, Cys1198-Cys1213, Cys1226-Cys1236, Cys1231-Cys1249, and Cys1243-Cys1259. Asn1175 carries N-linked (GlcNAc...) asparagine glycosylation. Residues 1262–1298 (ACTVNNFCKGMCYKTPAGAVCGCQSGYRLAVDMISCE) form the EGF-like 4 domain. LDL-receptor class B repeat units lie at residues 1385–1425 (DSVY…DWIT), 1471–1518 (RWLF…DHVK), and 1519–1561 (SKLY…FEQS). 3 N-linked (GlcNAc...) asparagine glycosylation sites follow: Asn1626, Asn1640, and Asn1656. A helical membrane pass occupies residues 1664–1684 (ISGIYSITIIVLLVSVLLLCV). Over 1685–1782 (YYYYQKNKLK…ALIYFVHNSK (98 aa)) the chain is Cytoplasmic.

Expressed in ovaries of reproductive females.

Its subcellular location is the membrane. Its function is as follows. Involved in uptake of vitellogenin by endocytosis. Expression is regulated by the juvenile hormone analog, methoprene (in vitro). The chain is Vitellogenin receptor from Solenopsis invicta (Red imported fire ant).